The primary structure comprises 323 residues: L-lactate dehydrogenase 1 (323 aa).

NAD(+)-binding positions include Val-18, Asp-39, Tyr-69, and Gly-83–Ala-84. The substrate site is built by Gln-86 and Arg-92. NAD(+) contacts are provided by residues Ser-105, Val-122–Asn-124, and Ser-147. Substrate is bound at residue Asn-124–Asp-127. Asp-152–Arg-155 contacts substrate. His-179 functions as the Proton acceptor in the catalytic mechanism. Tyr-223 is modified (phosphotyrosine). Substrate is bound at residue Thr-232.

The protein belongs to the LDH/MDH superfamily. LDH family. As to quaternary structure, homotetramer.

The protein resides in the cytoplasm. The catalysed reaction is (S)-lactate + NAD(+) = pyruvate + NADH + H(+). Its pathway is fermentation; pyruvate fermentation to lactate; (S)-lactate from pyruvate: step 1/1. Catalyzes the conversion of lactate to pyruvate. The polypeptide is L-lactate dehydrogenase 1 (Lactobacillus acidophilus (strain ATCC 700396 / NCK56 / N2 / NCFM)).